Consider the following 513-residue polypeptide: MQLSPSEISGLIKQRIEKFDNSVELKSEGTIVSVADGIVTIYGLNDVVAGEMIKLPGDVYGLALNLNTDSVGAVVLGDYEHIKEGDKAYCTGRILEVPVGEALLGRVVDALGNPIDGKGEVATDLTSPIEKIAPGVIWRKSVDQALQTGIKSIDSMVPIGRGQRELIIGDRQIGKTAIAVDTIINQKGTGVKCIYVAIGQKASTIANIVRQLEEHGAMEHTIIVAATASDSAALQYIAPYAGCSMGEYFRDRGQDALIVYDDLTKQAWAYRQISLLLRRPPGREAYPGDVFYLHSRLLERAARVNEEYVEKFTNGEVKGKTGSLTALPIIETQAGDISAFVPTNVISITDGQIFLETDLFNSGLRPAINPGNSVSRVGGAAQTKIIKKLGGGIRLALAQYRELEAFSQFASDLDEATRAQLNRGQRVTELLKQKQFSTLSVALMALSLYAADNGYLDNLEVSEVIPFESALHALAETKYSDVIAEINETGKYDADIADKLKIIVEDCKANQAW.

Residue 169–176 (GDRQIGKT) coordinates ATP.

Belongs to the ATPase alpha/beta chains family. In terms of assembly, F-type ATPases have 2 components, CF(1) - the catalytic core - and CF(0) - the membrane proton channel. CF(1) has five subunits: alpha(3), beta(3), gamma(1), delta(1), epsilon(1). CF(0) has three main subunits: a(1), b(2) and c(9-12). The alpha and beta chains form an alternating ring which encloses part of the gamma chain. CF(1) is attached to CF(0) by a central stalk formed by the gamma and epsilon chains, while a peripheral stalk is formed by the delta and b chains.

The protein resides in the cell inner membrane. The catalysed reaction is ATP + H2O + 4 H(+)(in) = ADP + phosphate + 5 H(+)(out). Produces ATP from ADP in the presence of a proton gradient across the membrane. The alpha chain is a regulatory subunit. This Francisella tularensis subsp. mediasiatica (strain FSC147) protein is ATP synthase subunit alpha.